A 263-amino-acid chain; its full sequence is tRNA (guanine-N(1)-)-methyltransferase (263 aa).

S-adenosyl-L-methionine is bound by residues Gly-113 and 137-142; that span reads LGDYVL.

Belongs to the RNA methyltransferase TrmD family. Homodimer.

Its subcellular location is the cytoplasm. The catalysed reaction is guanosine(37) in tRNA + S-adenosyl-L-methionine = N(1)-methylguanosine(37) in tRNA + S-adenosyl-L-homocysteine + H(+). In terms of biological role, specifically methylates guanosine-37 in various tRNAs. In Renibacterium salmoninarum (strain ATCC 33209 / DSM 20767 / JCM 11484 / NBRC 15589 / NCIMB 2235), this protein is tRNA (guanine-N(1)-)-methyltransferase.